The sequence spans 924 residues: DNA repair and recombination protein RDH54 (924 aa).

Basic and acidic residues predominate over residues 1–10 (MQIPKYENKP). Disordered regions lie at residues 1–21 (MQIP…GSNK) and 155–183 (EALS…NDGG). Low complexity predominate over residues 168–178 (TTSTTETVPST). The Helicase ATP-binding domain maps to 299-487 (LENDSDISGC…FTIIDFINPG (189 aa)). 346-353 (IPLTGLCK) contributes to the ATP binding site. The short motif at 472 to 475 (NDLN) is the DEGH box element. Lys-615 is covalently cross-linked (Glycyl lysine isopeptide (Lys-Gly) (interchain with G-Cter in ubiquitin)). The region spanning 631–790 (KLKVLMTLLE…DSEMRNKESS (160 aa)) is the Helicase C-terminal domain.

The protein belongs to the SNF2/RAD54 helicase family. As to quaternary structure, interacts with RAD51 and DMC1.

It localises to the nucleus. The catalysed reaction is ATP + H2O = ADP + phosphate + H(+). Functionally, involved in the recombinational repair of double-strand breaks (DSB) in DNA during mitosis and meiosis. Has DNA dependent ATPase activity. Promotes D-loop (displacement loop) formation with RAD51 recombinase. Modifies the topology of double-stranded DNA during the D-loop reaction to facilitate the invasion of the homologous duplex molecule by the initiating single-stranded DNA substrate. Required for adaptation from G2/M checkpoint arrest induced by a double strand break, by participating in monitoring the extent of single-stranded DNA produced by resection of DNA ends. This role is distinct from its roles in recombination. Promotes colocalization of RAD51 and DMC1 during meiotic recombination. Involved in crossover interference. In Saccharomyces cerevisiae (strain JAY291) (Baker's yeast), this protein is DNA repair and recombination protein RDH54 (RDH54).